A 646-amino-acid chain; its full sequence is Type III restriction-modification enzyme EcoPI Mod subunit (646 aa).

Residues 123 to 126 (DPPY) are binding of S-adenosyl methionine.

This sequence belongs to the N(4)/N(6)-methyltransferase family. Homodimer. A heterotetramer with stoichiometry Res(2)Mod(2).

The catalysed reaction is a 2'-deoxyadenosine in DNA + S-adenosyl-L-methionine = an N(6)-methyl-2'-deoxyadenosine in DNA + S-adenosyl-L-homocysteine + H(+). In terms of biological role, a beta subtype methylase that binds the system-specific DNA recognition site 5'-AGACC-3' and methylates A-3 (of only 1 strand as the other does not have an A residue). DNA restriction requires both the Res and Mod subunits. The polypeptide is Type III restriction-modification enzyme EcoPI Mod subunit (Enterobacteriaceae (Bacteriophage P1)).